The following is a 324-amino-acid chain: 3'-5' exoribonuclease YhaM (324 aa).

The region spanning 163 to 279 (HVVSMLELAK…LHYIDNLDAK (117 aa)) is the HD domain.

Belongs to the YhaM family.

Its function is as follows. Shows a 3'-5' exoribonuclease activity. The protein is 3'-5' exoribonuclease YhaM of Geobacillus sp. (strain WCH70).